We begin with the raw amino-acid sequence, 161 residues long: Cytidylate kinase (161 aa).

7–15 (GLAGTGTTT) contributes to the ATP binding site.

It belongs to the cytidylate kinase family. Type 2 subfamily.

It localises to the cytoplasm. It carries out the reaction CMP + ATP = CDP + ADP. It catalyses the reaction dCMP + ATP = dCDP + ADP. This chain is Cytidylate kinase (cmk), found in Methanothermobacter thermautotrophicus (strain ATCC 29096 / DSM 1053 / JCM 10044 / NBRC 100330 / Delta H) (Methanobacterium thermoautotrophicum).